The sequence spans 270 residues: uncharacterized protein (270 aa).

This is an uncharacterized protein from Escherichia coli (strain K12).